The primary structure comprises 536 residues: Phosphoenolpyruvate carboxykinase (ATP) (536 aa).

Residues Arg-61, Tyr-195, and Lys-201 each coordinate substrate. ATP is bound by residues Lys-201, His-220, and 236 to 244 (GLSGTGKTT). The Mn(2+) site is built by Lys-201 and His-220. Asp-257 lines the Mn(2+) pocket. The ATP site is built by Glu-285, Arg-322, and Thr-447. Position 322 (Arg-322) interacts with substrate.

This sequence belongs to the phosphoenolpyruvate carboxykinase (ATP) family. It depends on Mn(2+) as a cofactor.

The protein localises to the cytoplasm. It carries out the reaction oxaloacetate + ATP = phosphoenolpyruvate + ADP + CO2. Its pathway is carbohydrate biosynthesis; gluconeogenesis. In terms of biological role, involved in the gluconeogenesis. Catalyzes the conversion of oxaloacetate (OAA) to phosphoenolpyruvate (PEP) through direct phosphoryl transfer between the nucleoside triphosphate and OAA. The sequence is that of Phosphoenolpyruvate carboxykinase (ATP) from Allorhizobium ampelinum (strain ATCC BAA-846 / DSM 112012 / S4) (Agrobacterium vitis (strain S4)).